Reading from the N-terminus, the 182-residue chain is Adenine phosphoribosyltransferase (182 aa).

Belongs to the purine/pyrimidine phosphoribosyltransferase family. Homodimer.

The protein localises to the cytoplasm. It carries out the reaction AMP + diphosphate = 5-phospho-alpha-D-ribose 1-diphosphate + adenine. The protein operates within purine metabolism; AMP biosynthesis via salvage pathway; AMP from adenine: step 1/1. Functionally, catalyzes a salvage reaction resulting in the formation of AMP, that is energically less costly than de novo synthesis. The protein is Adenine phosphoribosyltransferase of Stutzerimonas stutzeri (Pseudomonas stutzeri).